The following is a 364-amino-acid chain: Aminomethyltransferase (364 aa).

Belongs to the GcvT family. As to quaternary structure, the glycine cleavage system is composed of four proteins: P, T, L and H.

The catalysed reaction is N(6)-[(R)-S(8)-aminomethyldihydrolipoyl]-L-lysyl-[protein] + (6S)-5,6,7,8-tetrahydrofolate = N(6)-[(R)-dihydrolipoyl]-L-lysyl-[protein] + (6R)-5,10-methylene-5,6,7,8-tetrahydrofolate + NH4(+). The glycine cleavage system catalyzes the degradation of glycine. This chain is Aminomethyltransferase, found in Escherichia coli (strain 55989 / EAEC).